A 245-amino-acid polypeptide reads, in one-letter code: Carboxymethylenebutenolidase homolog (245 aa).

The residue at position 2 (A2) is an N-acetylalanine. Catalysis depends on residues C132, D179, and H212. The residue at position 223 (S223) is a Phosphoserine.

It belongs to the dienelactone hydrolase family.

The protein localises to the cytoplasm. It is found in the cytosol. Functionally, cysteine hydrolase. The chain is Carboxymethylenebutenolidase homolog (Cmbl) from Mus musculus (Mouse).